The following is a 542-amino-acid chain: CTP synthase (542 aa).

Residues 1–264 (MKFIFITGGV…AKLIINKLKL (264 aa)) form an amidoligase domain region. Serine 12 is a CTP binding site. Position 12 (serine 12) interacts with UTP. Position 13–18 (13–18 (SLGKGI)) interacts with ATP. Tyrosine 53 provides a ligand contact to L-glutamine. Aspartate 70 serves as a coordination point for ATP. Mg(2+) contacts are provided by aspartate 70 and glutamate 138. Residues 145-147 (DIE), 185-190 (KTKPTQ), and lysine 221 each bind CTP. Residues 185-190 (KTKPTQ) and lysine 221 contribute to the UTP site. 237–239 (KDA) lines the ATP pocket. A Glutamine amidotransferase type-1 domain is found at 298-541 (YIMLKDAYTS…VKSALDKKLK (244 aa)). Glycine 359 contributes to the L-glutamine binding site. Cysteine 386 (nucleophile; for glutamine hydrolysis) is an active-site residue. L-glutamine is bound by residues 387 to 390 (LGMQ), glutamate 410, and arginine 467. Residues histidine 514 and glutamate 516 contribute to the active site.

The protein belongs to the CTP synthase family. Homotetramer.

It catalyses the reaction UTP + L-glutamine + ATP + H2O = CTP + L-glutamate + ADP + phosphate + 2 H(+). The enzyme catalyses L-glutamine + H2O = L-glutamate + NH4(+). The catalysed reaction is UTP + NH4(+) + ATP = CTP + ADP + phosphate + 2 H(+). Its pathway is pyrimidine metabolism; CTP biosynthesis via de novo pathway; CTP from UDP: step 2/2. Its activity is regulated as follows. Allosterically activated by GTP, when glutamine is the substrate; GTP has no effect on the reaction when ammonia is the substrate. The allosteric effector GTP functions by stabilizing the protein conformation that binds the tetrahedral intermediate(s) formed during glutamine hydrolysis. Inhibited by the product CTP, via allosteric rather than competitive inhibition. Functionally, catalyzes the ATP-dependent amination of UTP to CTP with either L-glutamine or ammonia as the source of nitrogen. Regulates intracellular CTP levels through interactions with the four ribonucleotide triphosphates. The sequence is that of CTP synthase from Methanococcus aeolicus (strain ATCC BAA-1280 / DSM 17508 / OCM 812 / Nankai-3).